A 301-amino-acid polypeptide reads, in one-letter code: Ribonuclease H2 subunit A (301 aa).

Met-1 carries the post-translational modification N-acetylmethionine. The RNase H type-2 domain maps to 28-251; the sequence is PCVLGVDEAG…AQAILEKEAE (224 aa). Residues Asp-34, Glu-35, and Asp-142 each contribute to the a divalent metal cation site. The residue at position 217 (Thr-217) is a Phosphothreonine. A compositionally biased stretch (acidic residues) spans 255–264; it reads WEDSEAEEDP. The tract at residues 255–284 is disordered; sequence WEDSEAEEDPERPGKITSYFSQGPQTCRPQ. Ser-258 bears the Phosphoserine mark. Residues 272 to 282 show a composition bias toward polar residues; sequence SYFSQGPQTCR.

It belongs to the RNase HII family. Eukaryotic subfamily. As to quaternary structure, the RNase H2 complex is a heterotrimer composed of the catalytic subunit RNASEH2A and the non-catalytic subunits RNASEH2B and RNASEH2C. Mn(2+) is required as a cofactor. It depends on Mg(2+) as a cofactor.

It is found in the nucleus. The catalysed reaction is Endonucleolytic cleavage to 5'-phosphomonoester.. Functionally, catalytic subunit of RNase HII, an endonuclease that specifically degrades the RNA of RNA:DNA hybrids. Participates in DNA replication, possibly by mediating the removal of lagging-strand Okazaki fragment RNA primers during DNA replication. Mediates the excision of single ribonucleotides from DNA:RNA duplexes. This Mus musculus (Mouse) protein is Ribonuclease H2 subunit A (Rnaseh2a).